The chain runs to 380 residues: Protein COS12 (380 aa).

Residues 1 to 70 lie on the Cytoplasmic side of the membrane; that stretch reads MDGAKFENTV…WKIRGKRHYL (70 aa). Residues 71-91 form a helical membrane-spanning segment; sequence VIVTALMFEVLYFLWTYSYIF. Over 92 to 231 the chain is Extracellular; it reads RERTLGKQVS…KLLWAFKEVT (140 aa). A helical membrane pass occupies residues 232-252; that stretch reads IMNSRFAFFSIAYLNGLLTIP. Topologically, residues 253–257 are cytoplasmic; the sequence is RLRNS. The chain crosses the membrane as a helical span at residues 258–278; that stretch reads LHILYVCAVLSSMIIEYLIGI. Residues 279–380 are Extracellular-facing; the sequence is DKFRFKSMNL…KEAQSACNDV (102 aa).

The protein belongs to the DUP/COS family.

The protein localises to the membrane. This chain is Protein COS12 (COS12), found in Saccharomyces cerevisiae (strain ATCC 204508 / S288c) (Baker's yeast).